The primary structure comprises 890 residues: Translation initiation factor IF-2 (890 aa).

The segment at 45–302 (LIDHLNQKNS…SSLQQGFQKP (258 aa)) is disordered. Residues 67–81 (STLNIPSTGGKSKSV) show a composition bias toward polar residues. A compositionally biased stretch (basic and acidic residues) spans 92 to 217 (VKRDPQEAER…RMAEENKWTD (126 aa)). Positions 252–266 (GRGRNAKAARPKKGN) are enriched in basic residues. Residues 267 to 280 (KHAESKADREEARA) are compositionally biased toward basic and acidic residues. In terms of domain architecture, tr-type G spans 389–558 (PRAPVVTIMG…LLQAEVLELK (170 aa)). The G1 stretch occupies residues 398–405 (GHVDHGKT). Residue 398–405 (GHVDHGKT) coordinates GTP. The segment at 423 to 427 (GITQH) is G2. Residues 444 to 447 (DTPG) form a G3 region. Residues 444-448 (DTPGH) and 498-501 (NKID) contribute to the GTP site. The tract at residues 498-501 (NKID) is G4. Residues 534–536 (SAK) are G5. Position 808 is an N6-acetyllysine (Lys808).

It belongs to the TRAFAC class translation factor GTPase superfamily. Classic translation factor GTPase family. IF-2 subfamily.

The protein resides in the cytoplasm. Its function is as follows. One of the essential components for the initiation of protein synthesis. Protects formylmethionyl-tRNA from spontaneous hydrolysis and promotes its binding to the 30S ribosomal subunits. Also involved in the hydrolysis of GTP during the formation of the 70S ribosomal complex. The protein is Translation initiation factor IF-2 of Shigella dysenteriae serotype 1 (strain Sd197).